A 411-amino-acid polypeptide reads, in one-letter code: Peptidase T (411 aa).

His79 is a binding site for Zn(2+). Residue Asp81 is part of the active site. Residue Asp142 participates in Zn(2+) binding. Glu176 serves as the catalytic Proton acceptor. Zn(2+)-binding residues include Glu177, Asp199, and His381.

Belongs to the peptidase M20B family. It depends on Zn(2+) as a cofactor.

The protein localises to the cytoplasm. The catalysed reaction is Release of the N-terminal residue from a tripeptide.. Its function is as follows. Cleaves the N-terminal amino acid of tripeptides. The chain is Peptidase T from Geobacillus thermodenitrificans (strain NG80-2).